Here is a 222-residue protein sequence, read N- to C-terminus: GTP-binding nuclear protein Ran-4 (222 aa).

Positions aspartate 10 to aspartate 174 constitute a Small GTPase Ran-type domain. Aspartate 21–threonine 28 serves as a coordination point for GTP. Residues histidine 40–valine 48 form a switch-I region. GTP is bound by residues glycine 71, asparagine 125–aspartate 128, and serine 153–lysine 155. The switch-II stretch occupies residues glycine 71 to glutamine 87.

This sequence belongs to the small GTPase superfamily. Ran family. Found in a nuclear export complex with RanGTP, exportin and pre-miRNA.

The protein localises to the nucleus. In terms of biological role, GTP-binding protein involved in nucleocytoplasmic transport. Required for the import of protein into the nucleus and also for RNA export. Involved in chromatin condensation and control of cell cycle. This Arabidopsis thaliana (Mouse-ear cress) protein is GTP-binding nuclear protein Ran-4 (RAN4).